The chain runs to 200 residues: NAD(P)H dehydrogenase (quinone) (200 aa).

The region spanning 4–191 is the Flavodoxin-like domain; that stretch reads VLVLYYSSYG…DIARYQGKHV (188 aa). Residues 10–15 and 79–81 contribute to the FMN site; these read SSYGHV and TRF. Tyr12 contacts NAD(+). Trp99 lines the substrate pocket. Residues 114–120 and His135 contribute to the FMN site; that span reads STGTQHG.

The protein belongs to the WrbA family. Requires FMN as cofactor.

It carries out the reaction a quinone + NADH + H(+) = a quinol + NAD(+). It catalyses the reaction a quinone + NADPH + H(+) = a quinol + NADP(+). The sequence is that of NAD(P)H dehydrogenase (quinone) from Burkholderia cenocepacia (strain HI2424).